The following is a 50-amino-acid chain: MVRNKAKGFPNQNNNKFEGEPRAKDDYASKRADGSINSHPQERMRASGRR.

The tract at residues 1–50 (MVRNKAKGFPNQNNNKFEGEPRAKDDYASKRADGSINSHPQERMRASGRR) is disordered. Composition is skewed to basic and acidic residues over residues 17-33 (FEGE…KRAD) and 40-50 (PQERMRASGRR).

It belongs to the SspK family.

It is found in the spore core. This chain is Small, acid-soluble spore protein K, found in Bacillus velezensis (strain DSM 23117 / BGSC 10A6 / LMG 26770 / FZB42) (Bacillus amyloliquefaciens subsp. plantarum).